The chain runs to 202 residues: D-alanyl-D-alanine dipeptidase (202 aa).

The Zn(2+) site is built by H116 and D123. E181 serves as the catalytic Proton donor/acceptor. H184 lines the Zn(2+) pocket.

Belongs to the peptidase M15D family. As to quaternary structure, homodimer. It depends on Zn(2+) as a cofactor. Requires Fe(2+) as cofactor. The cofactor is Co(2+). Ni(2+) is required as a cofactor.

The enzyme catalyses D-alanyl-D-alanine + H2O = 2 D-alanine. Inhibited by aminoalkyl phosphinate analogs. Its function is as follows. Catalyzes hydrolysis of the D-alanyl-D-alanine dipeptide. The polypeptide is D-alanyl-D-alanine dipeptidase (vanX) (Enterococcus faecium (Streptococcus faecium)).